A 114-amino-acid chain; its full sequence is Protein U68 (114 aa).

This sequence belongs to the herpesviridae UL96 family.

The sequence is that of Protein U68 (U68) from Human herpesvirus 6A (strain Uganda-1102) (HHV-6 variant A).